The chain runs to 397 residues: Plasma membrane iron permease (397 aa).

The next 4 helical transmembrane spans lie at 61-81 (FTAL…FYAL), 92-112 (IWEG…GFAM), 177-197 (AFPL…YFIY), and 292-312 (GSIL…FLMW). A phosphoserine mark is found at S337 and S338. A compositionally biased stretch (polar residues) spans 337-346 (SSHTPVQSSS). The interval 337 to 364 (SSHTPVQSSSSEDEFKINSPTDDKGDKA) is disordered. Position 340 is a phosphothreonine (T340). Phosphoserine occurs at positions 346, 347, and 355. Positions 349-364 (DEFKINSPTDDKGDKA) are enriched in basic and acidic residues. Residue T357 is modified to Phosphothreonine. Residues S374, S375, and S376 each carry the phosphoserine modification.

This sequence belongs to the oxidase-dependent Fe transporter (OFeT) (TC 9.A.10.1) family.

It localises to the membrane. Permease for high affinity iron uptake. The sequence is that of Plasma membrane iron permease (fip1) from Schizosaccharomyces pombe (strain 972 / ATCC 24843) (Fission yeast).